We begin with the raw amino-acid sequence, 230 residues long: Phosphoribosylaminoimidazole-succinocarboxamide synthase (230 aa).

Belongs to the SAICAR synthetase family.

It carries out the reaction 5-amino-1-(5-phospho-D-ribosyl)imidazole-4-carboxylate + L-aspartate + ATP = (2S)-2-[5-amino-1-(5-phospho-beta-D-ribosyl)imidazole-4-carboxamido]succinate + ADP + phosphate + 2 H(+). It functions in the pathway purine metabolism; IMP biosynthesis via de novo pathway; 5-amino-1-(5-phospho-D-ribosyl)imidazole-4-carboxamide from 5-amino-1-(5-phospho-D-ribosyl)imidazole-4-carboxylate: step 1/2. The polypeptide is Phosphoribosylaminoimidazole-succinocarboxamide synthase (Thermotoga petrophila (strain ATCC BAA-488 / DSM 13995 / JCM 10881 / RKU-1)).